Consider the following 473-residue polypeptide: Cannabinoid receptor 1 (473 aa).

Topologically, residues 1–121 are extracellular; sequence MKSILDGLAD…LNPSQQLAIA (121 aa). A required for mitochondrial localization region spans residues 2–23; that stretch reads KSILDGLADTTFRTITTDLLYV. 2 N-linked (GlcNAc...) asparagine glycosylation sites follow: asparagine 78 and asparagine 84. A helical membrane pass occupies residues 122–142; it reads VLSLTLGTFTVLENLLVLCVI. At 143–155 the chain is on the cytoplasmic side; it reads LHSRSLRCRPSYH. A helical membrane pass occupies residues 156–176; it reads FIGSLAVADLLGSVIFVYSFV. Topologically, residues 177-188 are extracellular; sequence DFHVFHRKDSPN. Residues 189-209 traverse the membrane as a helical segment; sequence VFLFKLGGVTASFTASVGSLF. Residues 210 to 233 are Cytoplasmic-facing; the sequence is LTAIDRYISIHRPLAYKRIVTRPK. Residues 234 to 254 traverse the membrane as a helical segment; that stretch reads AVVAFCLMWTIAIVIAVLPLL. The Extracellular portion of the chain corresponds to 255–278; it reads GWNCKKLQSVCSDIFPLIDETYLM. Residues 279–299 form a helical membrane-spanning segment; it reads FWIGVTSVLLLFIVYAYMYIL. The Cytoplasmic portion of the chain corresponds to 300–345; sequence WKAHSHAVRMIQRGTQKSIIIHTSEDGKVQVTRPDQARMDIRLAKT. A helical transmembrane segment spans residues 346 to 366; that stretch reads LVLILVVLIICWGPLLAIMVY. The Extracellular segment spans residues 367-378; it reads DVFGKMNKLIKT. A helical transmembrane segment spans residues 379–399; it reads VFAFCSMLCLLNSTVNPIIYA. The Cytoplasmic portion of the chain corresponds to 400 to 473; it reads LRSKDLRHAF…VSTDTSAEAL (74 aa). The S-palmitoyl cysteine moiety is linked to residue cysteine 416. Phosphoserine is present on residues serine 426 and serine 430.

Belongs to the G-protein coupled receptor 1 family. In terms of assembly, interacts (via C-terminus) with CNRIP1. Associates with G protein alpha subunits, including G(i) alpha-1/GNAI1, G(i) alpha-3/GNAI3 and G(o)-alpha/GNAO1; palmitoylation is important for interaction with GNAI3 and GNAO1. Post-translationally, palmitoylation at Cys-416 is important for recruitment at both plasma membrane and lipid rafts and association with G protein alpha subunits. As to expression, expressed in brain neurons (at protein level). Detected throughout the striatum, cortex and hippocampus, with highest levels in the lateral striatum. In rostral brain regions, high expression levels in the dorsal lateral striatum, while in the caudal brain regions, high levels are observed in the ventral lateral striatum. Expressed in neurons. In the hypothalamus, expressed in both GABAergic and glutamatergic presynaptic terminals of POMC neurons (at protein level). Expressed in striated muscles, including skeletal muscles (gastrocnemius and rectus abdominis) and myocardium (at protein level). Expressed in the liver, with highest levels in Kupffer cells and lower levels in endothelial cells as well as hepatocytes, particularly in perivascular areas (at protein level). The hepatic expression level is up-regulated in obese mice compared to lean animals.

Its subcellular location is the cell membrane. The protein localises to the mitochondrion outer membrane. It is found in the cell projection. It localises to the axon. The protein resides in the presynapse. Its activity is regulated as follows. Hemopressin, a peptide derived from hemoglobin subunit alpha (HBA1 and/or HBA2), acts as an antagonist peptide: hemopressin-binding efficiently blocks cannabinoid receptor CNR1 and subsequent signaling. Functionally, G-protein coupled receptor for cannabinoids, including endocannabinoids (eCBs), such as N-arachidonoylethanolamide (also called anandamide or AEA) and 2-arachidonoylglycerol (2-AG). Mediates many cannabinoid-induced effects, acting, among others, on food intake, memory loss, gastrointestinal motility, catalepsy, ambulatory activity, anxiety, chronic pain. Signaling typically involves reduction in cyclic AMP. In the hypothalamus, may have a dual effect on mitochondrial respiration depending upon the agonist dose and possibly upon the cell type. Increases respiration at low doses, while decreases respiration at high doses. At high doses, CNR1 signal transduction involves G-protein alpha-i protein activation and subsequent inhibition of mitochondrial soluble adenylate cyclase, decrease in cyclic AMP concentration, inhibition of protein kinase A (PKA)-dependent phosphorylation of specific subunits of the mitochondrial electron transport system, including NDUFS2. In the hypothalamus, inhibits leptin-induced reactive oxygen species (ROS) formation and mediates cannabinoid-induced increase in SREBF1 and FASN gene expression. In response to cannabinoids, drives the release of orexigenic beta-endorphin, but not that of melanocyte-stimulating hormone alpha/alpha-MSH, from hypothalamic POMC neurons, hence promoting food intake. In the hippocampus, regulates cellular respiration and energy production in response to cannabinoids. Involved in cannabinoid-dependent depolarization-induced suppression of inhibition (DSI), a process in which depolarization of CA1 postsynaptic pyramidal neurons mobilizes eCBs, which retrogradely activate presynaptic CB1 receptors, transiently decreasing GABAergic inhibitory neurotransmission. Also reduces excitatory synaptic transmission. In superior cervical ganglions and cerebral vascular smooth muscle cells, inhibits voltage-gated Ca(2+) channels in a constitutive, as well as agonist-dependent manner. In cerebral vascular smooth muscle cells, cannabinoid-induced inhibition of voltage-gated Ca(2+) channels leads to vasodilation and decreased vascular tone. Induces leptin production in adipocytes and reduces LRP2-mediated leptin clearance in the kidney, hence participating in hyperleptinemia. In adipose tissue, CNR1 signaling leads to increased expression of SREBF1, ACACA and FASN genes. In the liver, activation by endocannabinoids leads to increased de novo lipogenesis and reduced fatty acid catabolism, associated with increased expression of SREBF1/SREBP-1, GCK, ACACA, ACACB and FASN genes. May also affect de novo cholesterol synthesis and HDL-cholesteryl ether uptake. Peripherally modulates energy metabolism. In high carbohydrate diet-induced obesity, may decrease the expression of mitochondrial dihydrolipoyl dehydrogenase/DLD in striated muscles, as well as that of selected glucose/ pyruvate metabolic enzymes, hence affecting energy expenditure through mitochondrial metabolism. In response to cannabinoid anandamide, elicits a pro-inflammatory response in macrophages, which involves NLRP3 inflammasome activation and IL1B and IL18 secretion. In macrophages infiltrating pancreatic islets, this process may participate in the progression of type-2 diabetes and associated loss of pancreatic beta-cells. In Mus musculus (Mouse), this protein is Cannabinoid receptor 1 (Cnr1).